Consider the following 35-residue polypeptide: MQVNNLGFIASILFVLVPTVFLLILFIQTGKQSES.

Position 1 is an N-formylmethionine (Met1). The helical transmembrane segment at 7-28 threads the bilayer; sequence GFIASILFVLVPTVFLLILFIQ.

This sequence belongs to the PsbM family. PSII is composed of 1 copy each of membrane proteins PsbA, PsbB, PsbC, PsbD, PsbE, PsbF, PsbH, PsbI, PsbJ, PsbK, PsbL, PsbM, PsbT, PsbX, PsbY, PsbZ, Psb30/Ycf12, peripheral proteins PsbO, CyanoQ (PsbQ), PsbU, PsbV and a large number of cofactors. It forms dimeric complexes.

It localises to the cellular thylakoid membrane. One of the components of the core complex of photosystem II (PSII). PSII is a light-driven water:plastoquinone oxidoreductase that uses light energy to abstract electrons from H(2)O, generating O(2) and a proton gradient subsequently used for ATP formation. It consists of a core antenna complex that captures photons, and an electron transfer chain that converts photonic excitation into a charge separation. This subunit is found at the monomer-monomer interface. Involved in assembly of monomeric PSII from the CP43-less intermediate. The polypeptide is Photosystem II reaction center protein M (Synechocystis sp. (strain ATCC 27184 / PCC 6803 / Kazusa)).